The following is a 344-amino-acid chain: MIELQGLSQRFPGASGDVHALRDVSLSIAAGEVFGIIGRSGAGKSTLVRAINLLNRPSSGRVIVAGQELTALDTGALRLARREIGMIFQHFNLLSSRTVYENVALPLELAGKPKAEIAATVLPLLDLVGLSALKGRYPAQISGGQKQRVGIARALASKPKVLLSDEATSALDPETTRSILELLKQINRDLGLTIVMITHQMEVIKQVCDRVAVLEAGRVVETGRVIDVFLRPQHDVTRAMIGDVISQELPASVLKRVESRLGNGRDHVYRLAFTGEGVDQPVLAQAIRRYGLDFNILHGHIDEIQGQAFGSLAIMATGELADVKAAMEYLQAQGVVVEEFEHVV.

The ABC transporter domain occupies 2–241 (IELQGLSQRF…PQHDVTRAMI (240 aa)). 38-45 (GRSGAGKS) provides a ligand contact to ATP.

This sequence belongs to the ABC transporter superfamily. Methionine importer (TC 3.A.1.24) family. In terms of assembly, the complex is composed of two ATP-binding proteins (MetN), two transmembrane proteins (MetI) and a solute-binding protein (MetQ).

The protein resides in the cell inner membrane. It catalyses the reaction L-methionine(out) + ATP + H2O = L-methionine(in) + ADP + phosphate + H(+). It carries out the reaction D-methionine(out) + ATP + H2O = D-methionine(in) + ADP + phosphate + H(+). Functionally, part of the ABC transporter complex MetNIQ involved in methionine import. Responsible for energy coupling to the transport system. This is Methionine import ATP-binding protein MetN from Cupriavidus necator (strain ATCC 17699 / DSM 428 / KCTC 22496 / NCIMB 10442 / H16 / Stanier 337) (Ralstonia eutropha).